Here is a 227-residue protein sequence, read N- to C-terminus: Ribose-5-phosphate isomerase A (227 aa).

Substrate-binding positions include 26-29 (TGST), 82-85 (DGAD), and 95-98 (KGGG). Glu104 serves as the catalytic Proton acceptor. Lys122 lines the substrate pocket.

The protein belongs to the ribose 5-phosphate isomerase family. As to quaternary structure, homodimer.

It catalyses the reaction aldehydo-D-ribose 5-phosphate = D-ribulose 5-phosphate. It participates in carbohydrate degradation; pentose phosphate pathway; D-ribose 5-phosphate from D-ribulose 5-phosphate (non-oxidative stage): step 1/1. In terms of biological role, catalyzes the reversible conversion of ribose-5-phosphate to ribulose 5-phosphate. The chain is Ribose-5-phosphate isomerase A from Streptococcus pyogenes serotype M2 (strain MGAS10270).